The following is a 255-amino-acid chain: NAD-dependent protein deacylase (255 aa).

A Deacetylase sirtuin-type domain is found at 1 to 253 (MEFSDELLAS…PLLLQALRRS (253 aa)). 22–42 (GAGVSAESGIPTFRDALTGFW) is an NAD(+) binding site. Tyr67 and Arg70 together coordinate substrate. Position 101–104 (101–104 (QNVD)) interacts with NAD(+). Residue His119 is the Proton acceptor of the active site. 4 residues coordinate Zn(2+): Cys127, Cys130, Cys155, and Cys158. NAD(+) contacts are provided by residues 195-197 (GTS), 221-223 (NPA), and Ala239.

This sequence belongs to the sirtuin family. Class III subfamily. Requires Zn(2+) as cofactor.

The protein resides in the cytoplasm. The enzyme catalyses N(6)-acetyl-L-lysyl-[protein] + NAD(+) + H2O = 2''-O-acetyl-ADP-D-ribose + nicotinamide + L-lysyl-[protein]. It carries out the reaction N(6)-succinyl-L-lysyl-[protein] + NAD(+) + H2O = 2''-O-succinyl-ADP-D-ribose + nicotinamide + L-lysyl-[protein]. In terms of biological role, NAD-dependent lysine deacetylase and desuccinylase that specifically removes acetyl and succinyl groups on target proteins. Modulates the activities of several proteins which are inactive in their acylated form. The protein is NAD-dependent protein deacylase of Methylococcus capsulatus (strain ATCC 33009 / NCIMB 11132 / Bath).